The following is a 546-amino-acid chain: Chaperonin GroEL 1 (546 aa).

ATP is bound by residues 30–33 (TLGP), K51, 87–91 (DGTTT), G415, 479–481 (NAA), and D495. Positions 526-546 (KEDAPMPGGMPGGMGGMGMDM) are disordered. The segment covering 534 to 546 (GMPGGMGGMGMDM) has biased composition (gly residues).

Belongs to the chaperonin (HSP60) family. As to quaternary structure, forms a cylinder of 14 subunits composed of two heptameric rings stacked back-to-back. Interacts with the co-chaperonin GroES.

It localises to the cytoplasm. It catalyses the reaction ATP + H2O + a folded polypeptide = ADP + phosphate + an unfolded polypeptide.. Functionally, together with its co-chaperonin GroES, plays an essential role in assisting protein folding. The GroEL-GroES system forms a nano-cage that allows encapsulation of the non-native substrate proteins and provides a physical environment optimized to promote and accelerate protein folding. The sequence is that of Chaperonin GroEL 1 from Burkholderia vietnamiensis (strain G4 / LMG 22486) (Burkholderia cepacia (strain R1808)).